Consider the following 521-residue polypeptide: Exodeoxyribonuclease 7 large subunit (521 aa).

A disordered region spans residues Ala494–Phe521. Residues Ala498 to Ser508 show a composition bias toward low complexity.

Belongs to the XseA family. Heterooligomer composed of large and small subunits.

It is found in the cytoplasm. The enzyme catalyses Exonucleolytic cleavage in either 5'- to 3'- or 3'- to 5'-direction to yield nucleoside 5'-phosphates.. Functionally, bidirectionally degrades single-stranded DNA into large acid-insoluble oligonucleotides, which are then degraded further into small acid-soluble oligonucleotides. In Mesorhizobium japonicum (strain LMG 29417 / CECT 9101 / MAFF 303099) (Mesorhizobium loti (strain MAFF 303099)), this protein is Exodeoxyribonuclease 7 large subunit.